The sequence spans 107 residues: Sperm-specific class P protein 34 (107 aa).

The interval methionine 1–serine 26 is disordered. The 107-residue stretch at methionine 1–alanine 107 folds into the MSP domain. A compositionally biased stretch (polar residues) spans glycine 15–glutamate 25.

As to expression, expressed at higher level in testis.

This Caenorhabditis elegans protein is Sperm-specific class P protein 34 (ssp-34).